The following is a 327-amino-acid chain: GPI-linked NAD(P)(+)--arginine ADP-ribosyltransferase 1 (327 aa).

An N-terminal signal peptide occupies residues 1–22 (MQMPAMMSLLLVSVGLMEALQA). 2 disulfides stabilise this stretch: C53–C277 and C174–C224. N65 carries N-linked (GlcNAc...) asparagine glycosylation. A TR mART core domain is found at 73-273 (QVYADSWTLA…IYLRALGKHS (201 aa)). NAD(+)-binding residues include Y121 and R179. Catalysis depends on residues R179 and S202. Residue S233 coordinates NAD(+). E240 is a catalytic residue. N253 carries N-linked (GlcNAc...) asparagine glycosylation. A lipid anchor (GPI-anchor amidated serine) is attached at S295. Residues 296–327 (AMGQSPLSAVWSLLLLLWFLVVRAFPDGPGLL) constitute a propeptide, removed in mature form.

The protein belongs to the Arg-specific ADP-ribosyltransferase family.

It is found in the sarcoplasmic reticulum membrane. It catalyses the reaction L-arginyl-[protein] + NAD(+) = N(omega)-(ADP-D-ribosyl)-L-arginyl-[protein] + nicotinamide + H(+). Has ADP-ribosyltransferase activity toward GLP1R. This is GPI-linked NAD(P)(+)--arginine ADP-ribosyltransferase 1 (ART1) from Homo sapiens (Human).